Here is a 557-residue protein sequence, read N- to C-terminus: Leucine-rich glioma-inactivated protein 1 (557 aa).

The signal sequence occupies residues 1–34; the sequence is MESESIRRMGNACIPLKRIAYFLCLFSVVLLTEG. The LRRNT domain maps to 35-72; it reads KKPAKPKCPAVCTCSKDNALCENARSIPRTVPPDVISL. LRR repeat units lie at residues 92–113, 116–137, and 140–161; these read SLQL…AFIG, HLEY…TFRG, and SLIH…IFKG. One can recognise an LRRCT domain in the interval 173-223; it reads NSFNCDCKLKWLVEWLGHTNATVEDIYCEGPPEYKKRKINSLSPKDFDCII. N-linked (GlcNAc...) asparagine glycosylation is present at N192. EAR repeat units lie at residues 225 to 267, 271 to 313, 317 to 364, 366 to 415, 419 to 462, 464 to 506, and 510 to 552; these read EFAK…EWDH, TFRN…KRDG, KFIK…KWNG, GFYS…QWSK, LFIN…KWGG, SFQD…NWDA, and KFVK…KHVI. N-linked (GlcNAc...) asparagine glycosylation occurs at N277. An N-linked (GlcNAc...) asparagine glycan is attached at N422.

As to quaternary structure, oligomer. Interacts with KCNA1 within a complex containing KCNA1, KCNA4 and KCNAB1. Can bind to ADAM11 and ADAM23. Part of a complex containing ADAM22, DLG4/PSD95 and CACNG2 (stargazin). Glycosylated. As to expression, expressed in brain. High levels found in hippocampus, thalamic nuclei, neocortex, and molecular and granule cell layers of the cerebellum.

The protein localises to the secreted. The protein resides in the synapse. Its subcellular location is the cytoplasm. Functionally, plays a role in suppressing the production of MMP1/3 through the phosphatidylinositol 3-kinase/ERK pathway. Regulates voltage-gated potassium channels assembled from KCNA1, KCNA4 and KCNAB1. It slows down channel inactivation by precluding channel closure mediated by the KCNAB1 subunit. Ligand for ADAM22 that positively regulates synaptic transmission mediated by AMPA-type glutamate receptors. This Rattus norvegicus (Rat) protein is Leucine-rich glioma-inactivated protein 1 (Lgi1).